A 505-amino-acid polypeptide reads, in one-letter code: Transcription factor VHR2 (505 aa).

A compositionally biased stretch (basic and acidic residues) spans 1 to 16; that stretch reads MIDDTENSKIHLEGSH. 3 disordered regions span residues 1–23, 105–179, and 421–460; these read MIDD…KYTG, NRKR…LPYP, and QSNP…STSA. The span at 133 to 148 shows a compositional bias: low complexity; that stretch reads PSSSNMGSCSASNASS. A compositionally biased stretch (polar residues) spans 421-443; the sequence is QSNPMRPHSTSEVLSAHSSTKDA.

The protein belongs to the VHR1 family.

It localises to the nucleus. Functionally, transcription factor that regulates ERG9, but seems to have a more global function in transcription. This chain is Transcription factor VHR2 (VHR2), found in Saccharomyces cerevisiae (strain ATCC 204508 / S288c) (Baker's yeast).